The sequence spans 115 residues: uncharacterized protein (115 aa).

The next 3 membrane-spanning stretches (helical) occupy residues 23-43, 63-83, and 90-110; these read LVYAALAFVGGFAVWFSLFFA, AMVTMWIGVGAVLLLTLVVMV, and NVVIGWPFVGLLALGLVYVAA.

It is found in the cell membrane. This is an uncharacterized protein from Mycobacterium bovis (strain ATCC BAA-935 / AF2122/97).